A 351-amino-acid chain; its full sequence is Thiamine-phosphate synthase (351 aa).

The unknown stretch occupies residues 1–129 (MVEPYSQKEQ…AKACKQMRYQ (129 aa)). The disordered stretch occupies residues 65–85 (LRAARDTPGDPGTELTHPQEE). Positions 130-351 (VYTLESNLMG…SQLNRIKPEL (222 aa)) are thiamine-phosphate synthase. 4-amino-2-methyl-5-(diphosphooxymethyl)pyrimidine is bound by residues 177 to 181 (QYRDK) and Asn-209. Mg(2+) contacts are provided by Asp-210 and Asp-229. Ser-248 lines the 4-amino-2-methyl-5-(diphosphooxymethyl)pyrimidine pocket. Residue 274 to 276 (TPT) participates in 2-[(2R,5Z)-2-carboxy-4-methylthiazol-5(2H)-ylidene]ethyl phosphate binding. Lys-277 contributes to the 4-amino-2-methyl-5-(diphosphooxymethyl)pyrimidine binding site. Gly-304 contacts 2-[(2R,5Z)-2-carboxy-4-methylthiazol-5(2H)-ylidene]ethyl phosphate.

This sequence belongs to the thiamine-phosphate synthase family. Mg(2+) is required as a cofactor.

It catalyses the reaction 2-[(2R,5Z)-2-carboxy-4-methylthiazol-5(2H)-ylidene]ethyl phosphate + 4-amino-2-methyl-5-(diphosphooxymethyl)pyrimidine + 2 H(+) = thiamine phosphate + CO2 + diphosphate. The enzyme catalyses 2-(2-carboxy-4-methylthiazol-5-yl)ethyl phosphate + 4-amino-2-methyl-5-(diphosphooxymethyl)pyrimidine + 2 H(+) = thiamine phosphate + CO2 + diphosphate. It carries out the reaction 4-methyl-5-(2-phosphooxyethyl)-thiazole + 4-amino-2-methyl-5-(diphosphooxymethyl)pyrimidine + H(+) = thiamine phosphate + diphosphate. It participates in cofactor biosynthesis; thiamine diphosphate biosynthesis; thiamine phosphate from 4-amino-2-methyl-5-diphosphomethylpyrimidine and 4-methyl-5-(2-phosphoethyl)-thiazole: step 1/1. Its function is as follows. Condenses 4-methyl-5-(beta-hydroxyethyl)thiazole monophosphate (THZ-P) and 2-methyl-4-amino-5-hydroxymethyl pyrimidine pyrophosphate (HMP-PP) to form thiamine monophosphate (TMP). The polypeptide is Thiamine-phosphate synthase (Nostoc punctiforme (strain ATCC 29133 / PCC 73102)).